A 475-amino-acid polypeptide reads, in one-letter code: Ribulose bisphosphate carboxylase large chain (475 aa).

Positions 1–2 (MS) are excised as a propeptide. The residue at position 3 (P3) is an N-acetylproline. K14 is modified (N6,N6,N6-trimethyllysine). Residues N123 and T173 each contribute to the substrate site. The active-site Proton acceptor is the K175. Substrate is bound at residue K177. Residues K201, D203, and E204 each contribute to the Mg(2+) site. K201 carries the post-translational modification N6-carboxylysine. The active-site Proton acceptor is H294. The substrate site is built by R295, H327, and S379.

This sequence belongs to the RuBisCO large chain family. Type I subfamily. In terms of assembly, heterohexadecamer of 8 large chains and 8 small chains. The cofactor is Mg(2+).

It localises to the plastid. The protein resides in the chloroplast. It carries out the reaction 2 (2R)-3-phosphoglycerate + 2 H(+) = D-ribulose 1,5-bisphosphate + CO2 + H2O. The enzyme catalyses D-ribulose 1,5-bisphosphate + O2 = 2-phosphoglycolate + (2R)-3-phosphoglycerate + 2 H(+). Functionally, ruBisCO catalyzes two reactions: the carboxylation of D-ribulose 1,5-bisphosphate, the primary event in carbon dioxide fixation, as well as the oxidative fragmentation of the pentose substrate in the photorespiration process. Both reactions occur simultaneously and in competition at the same active site. This is Ribulose bisphosphate carboxylase large chain from Huperzia lucidula (Shining clubmoss).